Consider the following 208-residue polypeptide: uncharacterized protein (208 aa).

4 4Fe-4S ferredoxin-type domains span residues 59–88 (GVLV…SVGT), 114–145 (GDLN…WQQK), 147–176 (GCIT…VNTE), and 174–203 (NTES…IIEW). [4Fe-4S] cluster-binding residues include C68, C71, C74, C78, C123, C126, C131, C135, C156, C159, C162, C166, C183, C186, C189, and C193.

This is an uncharacterized protein from Escherichia coli O157:H7.